The primary structure comprises 155 residues: D-aminoacyl-tRNA deacylase (155 aa).

The short motif at 137 to 138 is the Gly-cisPro motif, important for rejection of L-amino acids element; that stretch reads GP.

It belongs to the DTD family. Homodimer.

Its subcellular location is the cytoplasm. The catalysed reaction is glycyl-tRNA(Ala) + H2O = tRNA(Ala) + glycine + H(+). It catalyses the reaction a D-aminoacyl-tRNA + H2O = a tRNA + a D-alpha-amino acid + H(+). An aminoacyl-tRNA editing enzyme that deacylates mischarged D-aminoacyl-tRNAs. Also deacylates mischarged glycyl-tRNA(Ala), protecting cells against glycine mischarging by AlaRS. Acts via tRNA-based rather than protein-based catalysis; rejects L-amino acids rather than detecting D-amino acids in the active site. By recycling D-aminoacyl-tRNA to D-amino acids and free tRNA molecules, this enzyme counteracts the toxicity associated with the formation of D-aminoacyl-tRNA entities in vivo and helps enforce protein L-homochirality. The protein is D-aminoacyl-tRNA deacylase of Geotalea uraniireducens (strain Rf4) (Geobacter uraniireducens).